Reading from the N-terminus, the 256-residue chain is Thiazole synthase (256 aa).

The active-site Schiff-base intermediate with DXP is the lysine 96. 1-deoxy-D-xylulose 5-phosphate is bound by residues glycine 157, 184–185, and 206–207; these read AG and NT.

This sequence belongs to the ThiG family. In terms of assembly, homotetramer. Forms heterodimers with either ThiH or ThiS.

It is found in the cytoplasm. The catalysed reaction is [ThiS sulfur-carrier protein]-C-terminal-Gly-aminoethanethioate + 2-iminoacetate + 1-deoxy-D-xylulose 5-phosphate = [ThiS sulfur-carrier protein]-C-terminal Gly-Gly + 2-[(2R,5Z)-2-carboxy-4-methylthiazol-5(2H)-ylidene]ethyl phosphate + 2 H2O + H(+). It functions in the pathway cofactor biosynthesis; thiamine diphosphate biosynthesis. Catalyzes the rearrangement of 1-deoxy-D-xylulose 5-phosphate (DXP) to produce the thiazole phosphate moiety of thiamine. Sulfur is provided by the thiocarboxylate moiety of the carrier protein ThiS. In vitro, sulfur can be provided by H(2)S. The chain is Thiazole synthase from Brucella abortus (strain S19).